Here is a 3432-residue protein sequence, read N- to C-terminus: Genome polyprotein (3432 aa).

Positions 2–15 (TKKPGGPGKNRAIN) are interaction with host EXOC1. Residues 2–109 (TKKPGGPGKN…RKQNKRGGNE (108 aa)) lie on the Cytoplasmic side of the membrane. Positions 37 to 72 (LLDGRGPVRFVLALITFFKFTALAPTKALLGRWKAV) are hydrophobic; homodimerization of capsid protein C. Positions 106 to 127 (GGNEGSIMWLASLAVVIACAGA) are cleaved as a propeptide — ER anchor for the capsid protein C, removed in mature form by serine protease NS3. Residues 110-130 (GSIMWLASLAVVIACAGAMKL) form a helical membrane-spanning segment. Residues 131 to 253 (SNFQGKLLMT…ATRYLMKTEN (123 aa)) are Extracellular-facing. N142 carries an N-linked (GlcNAc...) asparagine; by host glycan. Residues 254–274 (WIIRNPGYAFLAAVLGWMLGS) traverse the membrane as a helical segment. The Cytoplasmic portion of the chain corresponds to 275–279 (NNGQR). The chain crosses the membrane as a helical span at residues 280-294 (VVFTILLLLVAPAYS). Over 295 to 746 (FNCLGMGNRD…QVFGGAFRTL (452 aa)) the chain is Extracellular. Intrachain disulfides connect C297–C324, C354–C410, C354–C415, C368–C399, C386–C410, and C386–C415. The segment at 392 to 405 (DRGWGNGCGLFGKG) is fusion peptide. Residue N448 is glycosylated (N-linked (GlcNAc...) asparagine; by host). Cystine bridges form between C484–C581 and C598–C629. Residues 747–767 (FGGMSWITQGLMGALLLWMGV) form a helical membrane-spanning segment. At 768–773 (NARDRS) the chain is on the cytoplasmic side. A helical transmembrane segment spans residues 774-794 (IALAFLATGGVLVFLATNVHA). The Extracellular portion of the chain corresponds to 795–1219 (DTGCAIDITR…AFAEANSGGD (425 aa)). 6 cysteine pairs are disulfide-bonded: C798–C809, C849–C937, C973–C1017, C1074–C1123, C1085–C1106, and C1107–C1110. N-linked (GlcNAc...) asparagine; by host glycosylation is found at N924 and N1001. The helical transmembrane segment at 1220-1240 (VLHLALIAVFKIQPAFLVMNM) threads the bilayer. Residues 1241–1250 (LSTRWTNQEN) are Cytoplasmic-facing. Residues 1251–1271 (VVLVLGAAFFQLASVDLQIGV) form a helical membrane-spanning segment. H1272 is a topological domain (lumenal). The chain crosses the membrane as a helical span at residues 1273–1293 (GILNAAAIAWMIVRAITFPTT). Residues 1294–1309 (SSVTMPVLALLTPGMR) lie on the Cytoplasmic side of the membrane. Residues 1310-1330 (ALYLDTYRIILLVIGICSLLH) form a helical membrane-spanning segment. The Lumenal segment spans residues 1331–1341 (ERKKTMAKKKG). A helical membrane pass occupies residues 1342–1362 (AVLLGLALTSTGWFSPTTIAA). The Cytoplasmic segment spans residues 1363–1374 (GLMVCNPNKKRG). Residues 1375–1395 (WPATEFLSAVGLMFAIVGGLA) traverse the membrane as a helical segment. Topologically, residues 1396–1398 (ELD) are lumenal. The helical transmembrane segment at 1399 to 1419 (IESMSIPFMLAGLMAVSYVVS) threads the bilayer. Residues 1420–1476 (GKATDMWLERAADISWEMDAAITGSSRRLDVKLDDDGDFHLIDDPGVPWKVWVLRMS) lie on the Cytoplasmic side of the membrane. The segment at 1427-1466 (LERAADISWEMDAAITGSSRRLDVKLDDDGDFHLIDDPGV) is interacts with and activates NS3 protease. The segment at residues 1477 to 1497 (CIGLAALTPWAIVPAAFGYWL) is an intramembrane region (helical). At 1498–2173 (TLKTTKRGGV…RMALEELPDA (676 aa)) the chain is on the cytoplasmic side. Residues 1505 to 1682 (GGVFWDTPSP…DRQEEPVPEA (178 aa)) form the Peptidase S7 domain. Residues H1555, D1579, and S1639 each act as charge relay system; for serine protease NS3 activity in the active site. A Helicase ATP-binding domain is found at 1685–1841 (PNMLRKRQMT…DSNAPIHDLQ (157 aa)). The important for RNA-binding stretch occupies residues 1689-1692 (RKRQ). Residue 1698–1705 (LHPGSGKT) participates in ATP binding. Residues 1789–1792 (DEAH) carry the DEAH box motif. The region spanning 1852–2017 (GYEWITEYAG…GLVAQLYGPE (166 aa)) is the Helicase C-terminal domain. K1893 bears the N6-acetyllysine; by host mark. A disordered region spans residues 1950–1972 (NPSPITSASAAQRRGRVGRNPNQ). Residues 2168 to 2172 (EELPD) form a regulates the ATPase activity of NS3 helicase region. A helical transmembrane segment spans residues 2174-2194 (LETITLIVAITVMTGGFFLLM). Topologically, residues 2195-2199 (MQRKG) are lumenal. The helical intramembrane region spans 2200 to 2220 (IGKMGLGALVLTLATFFLWAA). Residue E2221 is a topological domain, lumenal. The helical transmembrane segment at 2222 to 2242 (VPGTKIAGTLLIALLLMVVLI) threads the bilayer. Residues 2243 to 2257 (PEPEKQRSQTDNQLA) are Cytoplasmic-facing. Residues 2258–2278 (VFLICVLTVVGVVAANEYGML) traverse the membrane as a helical segment. Residues 2279-2311 (EKTKADLKSMFGGKTQASGLTGLPSMALDLRPA) lie on the Lumenal side of the membrane. An intramembrane region (helical) is located at residues 2312–2332 (TAWALYGGSTVVLTPLLKHLI). Residues 2333 to 2368 (TSEYVTTSLASINSQAGSLFVLPRGVPFTDLDLTVG) lie on the Lumenal side of the membrane. A helical transmembrane segment spans residues 2369–2389 (LVFLGCWGQITLTTFLTAMVL). At 2390–2444 (ATLHYGYMLPGWQAEALRAAQRRTAAGIMKNAVVDGMVATDVPELERTTPLMQKK) the chain is on the cytoplasmic side. Residues 2445-2465 (VGQVLLIGVSVAAFLVNPNVT) traverse the membrane as a helical segment. Residues 2466 to 2469 (TVRE) lie on the Lumenal side of the membrane. Residues 2470 to 2490 (AGVLVTAATLTLWDNGASAVW) form a helical membrane-spanning segment. Residues 2491 to 3432 (NSTTATGLCH…DVLIQEDRVI (942 aa)) lie on the Cytoplasmic side of the membrane. The region spanning 2528–2793 (GRPGGRTLGE…DVNLGSGTRA (266 aa)) is the mRNA cap 0-1 NS5-type MT domain. Residue S2583 coordinates S-adenosyl-L-methionine. S2583 is modified (phosphoserine). Catalysis depends on K2588, which acts as the For 2'-O-MTase activity. The S-adenosyl-L-methionine site is built by G2613, W2614, T2631, K2632, D2658, and V2659. Catalysis depends on D2673, which acts as the For 2'-O-MTase activity. I2674 contributes to the S-adenosyl-L-methionine binding site. Residues K2709 and E2745 each act as for 2'-O-MTase activity in the active site. Y2747 contacts S-adenosyl-L-methionine. 4 residues coordinate Zn(2+): E2967, H2971, C2976, and C2979. A RdRp catalytic domain is found at 3057–3209 (GKMYADDTAG…KPLDDRFATA (153 aa)). The Zn(2+) site is built by H3244, C3260, and C3379.

The protein in the N-terminal section; belongs to the class I-like SAM-binding methyltransferase superfamily. mRNA cap 0-1 NS5-type methyltransferase family. As to quaternary structure, homodimer. Interacts (via N-terminus) with host EXOC1 (via C-terminus); this interaction results in EXOC1 degradation through the proteasome degradation pathway. Forms heterodimers with envelope protein E in the endoplasmic reticulum and Golgi. In terms of assembly, homodimer; in the endoplasmic reticulum and Golgi. Interacts with protein prM. Interacts with non-structural protein 1. Interacts with host HSPA5. As to quaternary structure, homodimer; Homohexamer when secreted. Interacts with envelope protein E. NS1 interacts with NS4B. Interacts with host complement protein CFH; this interaction leads to the degradation of C3. Interacts (via N-terminus) with serine protease NS3. In terms of assembly, forms a heterodimer with serine protease NS3. May form homooligomers. As to quaternary structure, forms a heterodimer with NS2B. Interacts with non-structural protein 2A (via N-terminus). Interacts with NS4B. Interacts with unphosphorylated RNA-directed RNA polymerase NS5; this interaction stimulates RNA-directed RNA polymerase NS5 guanylyltransferase activity. Interacts with host ILF2. Interacts with serine protease NS3. In terms of assembly, homodimer. Interacts with host STAT2; this interaction inhibits the phosphorylation of the latter, and, when all viral proteins are present (polyprotein), targets STAT2 for degradation. Interacts with serine protease NS3. It depends on Mn(2+) as a cofactor. Mg(2+) serves as cofactor. Specific enzymatic cleavages in vivo yield mature proteins. Cleavages in the lumen of endoplasmic reticulum are performed by host signal peptidase, whereas cleavages in the cytoplasmic side are performed by serine protease NS3. Signal cleavage at the 2K-4B site requires a prior NS3 protease-mediated cleavage at the 4A-2K site. Post-translationally, cleaved in post-Golgi vesicles by a host furin, releasing the mature small envelope protein M, and peptide pr. This cleavage is incomplete as up to 30% of viral particles still carry uncleaved prM. In terms of processing, N-glycosylated. N-glycosylated. The excreted form is glycosylated and this is required for efficient secretion of the protein from infected cells. Post-translationally, acetylated by host KAT5. Acetylation modulates NS3 RNA-binding and unwinding activities and plays an important positive role for viral replication. In terms of processing, phosphorylated on serines residues. This phosphorylation may trigger NS5 nuclear localization.

Its subcellular location is the virion. The protein resides in the host nucleus. It localises to the host cytoplasm. It is found in the host perinuclear region. The protein localises to the secreted. Its subcellular location is the virion membrane. The protein resides in the host endoplasmic reticulum membrane. It localises to the host cell surface. It carries out the reaction Selective hydrolysis of -Xaa-Xaa-|-Yaa- bonds in which each of the Xaa can be either Arg or Lys and Yaa can be either Ser or Ala.. It catalyses the reaction RNA(n) + a ribonucleoside 5'-triphosphate = RNA(n+1) + diphosphate. The catalysed reaction is a ribonucleoside 5'-triphosphate + H2O = a ribonucleoside 5'-diphosphate + phosphate + H(+). The enzyme catalyses ATP + H2O = ADP + phosphate + H(+). It carries out the reaction a 5'-end (5'-triphosphoguanosine)-ribonucleoside in mRNA + S-adenosyl-L-methionine = a 5'-end (N(7)-methyl 5'-triphosphoguanosine)-ribonucleoside in mRNA + S-adenosyl-L-homocysteine. It catalyses the reaction a 5'-end (N(7)-methyl 5'-triphosphoguanosine)-ribonucleoside in mRNA + S-adenosyl-L-methionine = a 5'-end (N(7)-methyl 5'-triphosphoguanosine)-(2'-O-methyl-ribonucleoside) in mRNA + S-adenosyl-L-homocysteine + H(+). In terms of biological role, plays a role in virus budding by binding to the cell membrane and gathering the viral RNA into a nucleocapsid that forms the core of a mature virus particle. During virus entry, may induce genome penetration into the host cytoplasm after hemifusion induced by the surface proteins. Can migrate to the cell nucleus where it modulates host functions. Overcomes the anti-viral effects of host EXOC1 by sequestering and degrading the latter through the proteasome degradation pathway. Its function is as follows. Inhibits RNA silencing by interfering with host Dicer. Prevents premature fusion activity of envelope proteins in trans-Golgi by binding to envelope protein E at pH6.0. After virion release in extracellular space, gets dissociated from E dimers. Functionally, acts as a chaperone for envelope protein E during intracellular virion assembly by masking and inactivating envelope protein E fusion peptide. prM is the only viral peptide matured by host furin in the trans-Golgi network probably to avoid catastrophic activation of the viral fusion activity in acidic Golgi compartment prior to virion release. prM-E cleavage is inefficient, and many virions are only partially matured. These uncleaved prM would play a role in immune evasion. In terms of biological role, may play a role in virus budding. Exerts cytotoxic effects by activating a mitochondrial apoptotic pathway through M ectodomain. May display a viroporin activity. Its function is as follows. Binds to host cell surface receptor and mediates fusion between viral and cellular membranes. Efficient virus attachment to cell is, at least in part, mediated by host HSPA5. Envelope protein is synthesized in the endoplasmic reticulum in the form of heterodimer with protein prM. They play a role in virion budding in the ER, and the newly formed immature particle is covered with 60 spikes composed of heterodimer between precursor prM and envelope protein E. The virion is transported to the Golgi apparatus where the low pH causes dissociation of PrM-E heterodimers and formation of E homodimers. prM-E cleavage is inefficient, and many virions are only partially matured. These uncleaved prM would play a role in immune evasion. Involved in immune evasion, pathogenesis and viral replication. Once cleaved off the polyprotein, is targeted to three destinations: the viral replication cycle, the plasma membrane and the extracellular compartment. Essential for viral replication. Required for formation of the replication complex and recruitment of other non-structural proteins to the ER-derived membrane structures. Excreted as a hexameric lipoparticle that plays a role against host immune response. Antagonizing the complement function. Binds to the host macrophages and dendritic cells. Inhibits signal transduction originating from Toll-like receptor 3 (TLR3). Functionally, component of the viral RNA replication complex that functions in virion assembly and antagonizes the host alpha/beta interferon antiviral response. In terms of biological role, required cofactor for the serine protease function of NS3. May have membrane-destabilizing activity and form viroporins. Its function is as follows. Displays three enzymatic activities: serine protease, NTPase and RNA helicase. NS3 serine protease, in association with NS2B, performs its autocleavage and cleaves the polyprotein at dibasic sites in the cytoplasm: C-prM, NS2A-NS2B, NS2B-NS3, NS3-NS4A, NS4A-2K and NS4B-NS5. NS3 RNA helicase binds RNA and unwinds dsRNA in the 3' to 5' direction. Regulates the ATPase activity of the NS3 helicase activity. NS4A allows NS3 helicase to conserve energy during unwinding. Functionally, functions as a signal peptide for NS4B and is required for the interferon antagonism activity of the latter. In terms of biological role, induces the formation of ER-derived membrane vesicles where the viral replication takes place. Inhibits interferon (IFN)-induced host STAT1 phosphorylation and nuclear translocation, thereby preventing the establishment of cellular antiviral state by blocking the IFN-alpha/beta pathway. Inhibits STAT2 translocation in the nucleus after IFN-alpha treatment. Its function is as follows. Replicates the viral (+) and (-) RNA genome. Performs the capping of genomes in the cytoplasm. NS5 methylates viral RNA cap at guanine N-7 and ribose 2'-O positions. Besides its role in RNA genome replication, also prevents the establishment of cellular antiviral state by blocking the interferon-alpha/beta (IFN-alpha/beta) signaling pathway. Inhibits host TYK2 and STAT2 phosphorylation, thereby preventing activation of JAK-STAT signaling pathway. In Ardeidae (herons), this protein is Genome polyprotein.